The following is a 2094-amino-acid chain: Protein Ycf2 (2094 aa).

1385 to 1392 (GPPETGRS) lines the ATP pocket.

It belongs to the Ycf2 family.

Its subcellular location is the plastid. It is found in the chloroplast stroma. Its function is as follows. Probable ATPase of unknown function. Its presence in a non-photosynthetic plant (Epifagus virginiana) and experiments in tobacco indicate that it has an essential function which is probably not related to photosynthesis. In Huperzia lucidula (Shining clubmoss), this protein is Protein Ycf2.